The sequence spans 526 residues: Peptide chain release factor 3 (526 aa).

The tr-type G domain occupies 8-277; the sequence is GKRRTFAIIS…GLTDWAPAPQ (270 aa). GTP is bound by residues 17-24, 85-89, and 139-142; these read SHPDAGKT, DTPGH, and NKLD.

Belongs to the TRAFAC class translation factor GTPase superfamily. Classic translation factor GTPase family. PrfC subfamily.

Its subcellular location is the cytoplasm. Functionally, increases the formation of ribosomal termination complexes and stimulates activities of RF-1 and RF-2. It binds guanine nucleotides and has strong preference for UGA stop codons. It may interact directly with the ribosome. The stimulation of RF-1 and RF-2 is significantly reduced by GTP and GDP, but not by GMP. The chain is Peptide chain release factor 3 from Aliivibrio fischeri (strain ATCC 700601 / ES114) (Vibrio fischeri).